The sequence spans 98 residues: NADH-ubiquinone oxidoreductase chain 4L (98 aa).

3 helical membrane passes run 1 to 21, 28 to 48, and 59 to 79; these read MMSI…GVLI, STLL…ALLI, and APLI…ALLV.

This sequence belongs to the complex I subunit 4L family. In terms of assembly, core subunit of respiratory chain NADH dehydrogenase (Complex I) which is composed of 45 different subunits.

It is found in the mitochondrion inner membrane. It carries out the reaction a ubiquinone + NADH + 5 H(+)(in) = a ubiquinol + NAD(+) + 4 H(+)(out). Functionally, core subunit of the mitochondrial membrane respiratory chain NADH dehydrogenase (Complex I) which catalyzes electron transfer from NADH through the respiratory chain, using ubiquinone as an electron acceptor. Part of the enzyme membrane arm which is embedded in the lipid bilayer and involved in proton translocation. The chain is NADH-ubiquinone oxidoreductase chain 4L (MT-ND4L) from Osphranter robustus (Wallaroo).